Consider the following 201-residue polypeptide: 3-isopropylmalate dehydratase small subunit (201 aa).

The protein belongs to the LeuD family. LeuD type 1 subfamily. Heterodimer of LeuC and LeuD.

The enzyme catalyses (2R,3S)-3-isopropylmalate = (2S)-2-isopropylmalate. Its pathway is amino-acid biosynthesis; L-leucine biosynthesis; L-leucine from 3-methyl-2-oxobutanoate: step 2/4. Its function is as follows. Catalyzes the isomerization between 2-isopropylmalate and 3-isopropylmalate, via the formation of 2-isopropylmaleate. This Shewanella amazonensis (strain ATCC BAA-1098 / SB2B) protein is 3-isopropylmalate dehydratase small subunit.